An 85-amino-acid polypeptide reads, in one-letter code: Large ribosomal subunit protein bL27 (85 aa).

Residues 1 to 25 (MAHKKGVGSSRNGRDSNPKMLGVKR) are disordered.

The protein belongs to the bacterial ribosomal protein bL27 family.

The chain is Large ribosomal subunit protein bL27 from Roseiflexus castenholzii (strain DSM 13941 / HLO8).